A 193-amino-acid polypeptide reads, in one-letter code: ER membrane protein complex subunit 4 (193 aa).

The next 2 helical transmembrane spans lie at 91-111 and 137-157; these read ILAY…TLML and LWPA…IGVY.

The protein belongs to the EMC4 family.

It is found in the endoplasmic reticulum membrane. The sequence is that of ER membrane protein complex subunit 4 from Schizosaccharomyces pombe (strain 972 / ATCC 24843) (Fission yeast).